The sequence spans 5068 residues: Protein piccolo (5068 aa).

Positions 1 to 20 (MGNEASLEGEGLPEGLAAAA) are enriched in low complexity. 2 disordered regions span residues 1-143 (MGNE…DFKE) and 173-524 (FDLI…QAPA). The span at 93–102 (PGKPPDPGRP) shows a compositional bias: pro residues. Basic and acidic residues-rich tracts occupy residues 111–122 (RTTDTFRSEQKL), 133–143 (KESKSRTDFKE), and 185–199 (ETTKKQKVAQKDQGK). A Phosphoserine modification is found at Ser-212. Positions 232-241 (PSKSVSSQQA) are enriched in polar residues. Over residues 252–279 (AKPSQQSPAQTPAQQAKPVAQQPGPAKA) the composition is skewed to low complexity. The span at 319-334 (TSLQQPGPKSLAQTPG) shows a compositional bias: polar residues. Composition is skewed to pro residues over residues 391–407 (PTKPSPQQPIPAKPQPQ) and 416–487 (PQQP…PQPQ). Residues 401–500 (PAKPQPQQPV…LGKPSAQQPS (100 aa)) are 10 X 10 AA tandem approximate repeats of P-A-K-P-Q-P-Q-Q-P-X. The segment covering 495–508 (SAQQPSKSISQTVT) has biased composition (polar residues). Over residues 515–524 (PPTSAAQAPA) the composition is skewed to low complexity. The C4-type zinc-finger motif lies at 532 to 556 (CPLCNTTELLLHTPEKANFNTCTEC). Disordered regions lie at residues 594-867 (AAIP…TVTG), 883-1005 (LIST…TELN), 1057-1345 (LGDM…PSDL), and 1364-1803 (VGEK…SDPE). The segment covering 610-625 (QPATASKSPVPSQQAS) has biased composition (polar residues). Positions 626 to 644 (PKKELPSKQDSPKAPESKK) are enriched in basic and acidic residues. The segment covering 709-738 (SPSSAAATSKPAILSSQVQAQAQVTTAPPL) has biased composition (low complexity). The span at 782 to 795 (ESKDPVQKKEEPKK) shows a compositional bias: basic and acidic residues. The segment covering 809–830 (VPKGSPTPSGTRPTTGQATPQS) has biased composition (low complexity). Ser-844 and Ser-856 each carry phosphoserine. Polar residues-rich tracts occupy residues 856–865 (SQPTTPQETV) and 883–893 (LISTAGQQAPH). Residue Thr-860 is modified to Phosphothreonine. A C4-type zinc finger spans residues 997 to 1020 (CPLCRTELNVGSQDPPNFNTCTEC). Pro residues predominate over residues 1073–1085 (SPVPAPAEPPPQK). Residues 1097-1116 (KETEVKAETEKQIPEKETPS) show a composition bias toward basic and acidic residues. Residue Thr-1120 is modified to Phosphothreonine. Basic and acidic residues-rich tracts occupy residues 1144-1165 (PEKKPSEEEKALPADKKEKKPP), 1172-1186 (LEEKKPIPDDQKLPP), 1244-1253 (PKDRQKESRD), and 1262-1283 (TAKEGRGEPSKDRTEKEEDKSD). Over residues 1290-1306 (PKSPQGLSDTGYSSDGI) the composition is skewed to polar residues. Ser-1292, Ser-1302, Ser-1303, Ser-1332, Ser-1334, Ser-1337, Ser-1338, and Ser-1341 each carry phosphoserine. The segment covering 1319–1333 (SDEKDLLKGLKKDSF) has biased composition (basic and acidic residues). The span at 1334–1343 (SQESSPSSPS) shows a compositional bias: low complexity. A compositionally biased stretch (polar residues) spans 1374-1392 (PQKVSPEQPQDQQKTQTPS). A compositionally biased stretch (basic and acidic residues) spans 1405–1444 (KESQEKKVTSKKDSAQGFPSRKEHKENPELVDDLSPRRAS). Phosphoserine occurs at positions 1439, 1451, 1452, 1454, 1457, 1481, 1484, 1505, and 1507. The segment covering 1499–1511 (SADEDASGSEDEE) has biased composition (acidic residues). A Phosphothreonine modification is found at Thr-1552. Phosphoserine occurs at positions 1553, 1563, and 1575. Residues 1566-1575 (DEDDETFDES) are compositionally biased toward acidic residues. Positions 1576-1587 (PELKFRETKSQE) are enriched in basic and acidic residues. Residues 1606–1624 (ELNSTVTDKYSAESSQKKT) are compositionally biased toward polar residues. The segment covering 1628 to 1638 (FDEEPELEMES) has biased composition (acidic residues). Residue Ser-1638 is modified to Phosphoserine. Thr-1640 is subject to Phosphothreonine. Residues Ser-1642 and Ser-1647 each carry the phosphoserine modification. The span at 1650–1667 (EGSSSLHASSFTPGTSPT) shows a compositional bias: polar residues. Residues 1707–1720 (DSSEEEELREEEEL) show a composition bias toward acidic residues. A phosphoserine mark is found at Ser-1708 and Ser-1709. Residues 1721 to 1734 (LKEQEKQRELEQQQ) are compositionally biased toward basic and acidic residues. Thr-1760 is subject to Phosphothreonine. Ser-1766 carries the phosphoserine modification. The span at 1775–1790 (EELRQAAEMEELHRSS) shows a compositional bias: basic and acidic residues. Phosphoserine is present on residues Ser-1795, Ser-1800, Ser-1808, and Ser-1829. 2 disordered regions span residues 2104–2126 (PSESATSVPPSDTPSLTSSISSV) and 2261–2377 (EAEL…AAAA). A compositionally biased stretch (low complexity) spans 2109–2126 (TSVPPSDTPSLTSSISSV). Positions 2277–2291 (TPSSQTKEQPGSPHS) are enriched in polar residues. Pro residues predominate over residues 2334–2368 (QPPPPPPPPPPPPPPPPPPPPPPLPPATSPKPPTY). Position 2495 is a phosphoserine (Ser-2495). A glycan (O-linked (GlcNAc) threonine) is linked at Thr-2686. Ser-2960 is a glycosylation site (O-linked (GlcNAc) serine). Thr-2998 bears the Phosphothreonine mark. Disordered stretches follow at residues 3334–3443 (KEEK…SKVS) and 3490–3556 (KGGS…LYSP). Ser-3358 is subject to Phosphoserine. Residues 3361-3370 (DDPRNLKKIV) show a composition bias toward basic and acidic residues. Ser-3372 bears the Phosphoserine mark. Phosphothreonine is present on residues Thr-3376 and Thr-3403. The segment covering 3403 to 3412 (TDDEDQDEWD) has biased composition (acidic residues). Positions 3495-3507 (GCQTETDPDTQSP) are enriched in polar residues. Phosphoserine is present on residues Ser-3506, Ser-3514, Ser-3545, Ser-3549, Ser-3555, Ser-3558, Ser-3561, Ser-3582, Ser-3608, Ser-3610, and Ser-3616. 2 disordered regions span residues 3576–3679 (PLPD…RRRM) and 3760–3797 (DYMSDSEVSSTRPSRVESQHGIERPRTAPQTEFSQFIP). Composition is skewed to polar residues over residues 3636-3645 (KGSQTTSGTQ) and 3661-3673 (STGTQSTYSTMGT). Ser-3763 carries the phosphoserine modification. Residues 3773–3785 (SRVESQHGIERPR) show a composition bias toward basic and acidic residues. The segment covering 3787-3797 (APQTEFSQFIP) has biased composition (polar residues). A phosphoserine mark is found at Ser-4016, Ser-4042, and Ser-4132. Disordered stretches follow at residues 4207–4231 (ADKPYSSGSRSRPSSRPSSVYGLDL) and 4254–4273 (VSFGHSSSSARTKPTSLPIS). Positions 4210–4231 (PYSSGSRSRPSSRPSSVYGLDL) are enriched in low complexity. Over residues 4257 to 4273 (GHSSSSARTKPTSLPIS) the composition is skewed to polar residues. Phosphoserine occurs at positions 4286, 4290, 4293, 4322, and 4358. Residues 4317 to 4339 (RDQFGSSHSLPEVQQHMREESRT) are disordered. The region spanning 4424–4518 (RIKITRDSKD…EAEICVRLDL (95 aa)) is the PDZ domain. The segment at 4574-4620 (KGAHAHSGPTSAGSSSVPSPGQPGSPSVSKKKHGGSKPTDVSKTASH) is disordered. The span at 4578–4601 (AHSGPTSAGSSSVPSPGQPGSPSV) shows a compositional bias: low complexity. Residue Ser-4592 is modified to Phosphoserine. Residues 4622–4751 (ITGEIQLQIN…SHLDNTPRWY (130 aa)) form the C2 1 domain. Ca(2+) is bound by residues Asp-4651 and Asp-4657. At Ser-4706 the chain carries Phosphoserine. Residues Asp-4721, Asp-4723, Ser-4726, and Asp-4729 each coordinate Ca(2+). Disordered regions lie at residues 4758 to 4834 (ESIE…SVAQ) and 4857 to 4891 (QPTKPTNHRPAETSVSTGSSGSSVGSGYSVDSEGS). Low complexity-rich tracts occupy residues 4766–4778 (HSSQNSQQSPKPS) and 4805–4815 (SSPGSSKSSSE). The segment covering 4823 to 4834 (PSRSQSKTSVAQ) has biased composition (polar residues). Residues 4870–4891 (SVSTGSSGSSVGSGYSVDSEGS) show a composition bias toward low complexity. Positions 4933–5058 (VMGEIKLALK…DLRKRIVNWH (126 aa)) constitute a C2 2 domain.

Interacts with BSN, ERC2/CAST1, RIMS1 and UNC13A. Interacts (via C-terminus) with TRIO (via N-terminus). Interacts with CTBP1. Interacts with SIAH1; this interaction negatively regulates SIAH1 E3 ligase activity. Directly interacts with GIT1 and GIT2. Ca(2+) serves as cofactor. In terms of tissue distribution, highly expressed in brain. Moderately expressed in pituitary gland and pancreatic islets. Low levels found in stomach.

Its subcellular location is the presynaptic active zone. Its function is as follows. Scaffold protein of the presynaptic cytomatrix at the active zone (CAZ) which is the place in the synapse where neurotransmitter is released. After synthesis, participates in the formation of Golgi-derived membranous organelles termed Piccolo-Bassoon transport vesicles (PTVs) that are transported along axons to sites of nascent synaptic contacts. At the presynaptic active zone, regulates the spatial organization of synaptic vesicle cluster, the protein complexes that execute membrane fusion and compensatory endocytosis. Organizes as well the readily releasable pool of synaptic vesicles and safeguards a fraction of them to be not immediately available for action potential-induced release. Also functions in processes other than assembly such as the regulation of specific presynaptic protein ubiquitination by interacting with SIAH1 or the regulation of presynaptic autophagy. Also mediates synapse to nucleus communication leading to reconfiguration of gene expression by associating with the transcriptional corepressor CTBP1 and by subsequently reducing the size of its pool available for nuclear import. The protein is Protein piccolo of Mus musculus (Mouse).